The primary structure comprises 478 residues: Probable serine carboxypeptidase CPVL (478 aa).

Residues 1-22 (MVRAQWKVIILLILLMVIPSDG) form the signal peptide. 2 N-linked (GlcNAc...) asparagine glycosylation sites follow: Asn-83 and Asn-134. Residue Ser-206 is part of the active site. N-linked (GlcNAc...) asparagine glycans are attached at residues Asn-309 and Asn-350. Active-site residues include Asp-390 and His-450.

Belongs to the peptidase S10 family.

In terms of biological role, may be involved in the digestion of phagocytosed particles in the lysosome, participation in an inflammatory protease cascade, and trimming of peptides for antigen presentation. In Rattus norvegicus (Rat), this protein is Probable serine carboxypeptidase CPVL (CPVL).